The sequence spans 879 residues: JmjC domain-containing histone demethylation protein 1 (879 aa).

Disordered regions lie at residues Met-1 to Lys-45, Ser-117 to Lys-212, and Lys-407 to Lys-449. The PHD-type zinc finger occupies Pro-23–Arg-116. 2 stretches are compositionally biased toward basic and acidic residues: residues Ile-183 to Gln-192 and Lys-407 to Glu-433. In terms of domain architecture, JmjC spans Asn-416–Ile-598. Thr-472 serves as a coordination point for substrate. 2 residues coordinate Fe cation: His-475 and Asp-477. Residue Lys-492 coordinates substrate. Position 566 (His-566) interacts with Fe cation. Residues His-763–His-879 are disordered. Over residues Glu-769 to Gln-782 the composition is skewed to polar residues. Residues Pro-786–Glu-818 are compositionally biased toward low complexity. Basic and acidic residues predominate over residues Phe-848–Ile-864.

This sequence belongs to the JHDM1 histone demethylase family. It depends on Fe(2+) as a cofactor.

It is found in the nucleus. It catalyses the reaction N(6),N(6)-dimethyl-L-lysyl(36)-[histone H3] + 2 2-oxoglutarate + 2 O2 = L-lysyl(36)-[histone H3] + 2 formaldehyde + 2 succinate + 2 CO2. Functionally, histone demethylase that specifically demethylates 'Lys-36' of histone H3, thereby playing a central role in histone code. In Cryptococcus neoformans var. neoformans serotype D (strain B-3501A) (Filobasidiella neoformans), this protein is JmjC domain-containing histone demethylation protein 1 (JHD1).